A 380-amino-acid polypeptide reads, in one-letter code: MDFNLNDEQELFVAGIRELMASENWEAYFAECDRDSVYPERFVKALADMGIDSLLIPEEHGGLDAGFVTLAAVWMELGRLGAPTYVLYQLPGGFNTFLREGTQEQIDKIMAFRGTGKQMWNSAITEPGAGSDVGSLKTTYTRRNGKIYLNGSKCFITSSAYTPYIVVMARDGASPDKPVYTEWFVDMSKPGIKVTKLEKLGLRMDSCCEITFDDVELDEKDMFGREGNGFNRVKEEFDHERFLVALTNYGTAMCAFEDAARYANQRVQFGEAIGRFQLIQEKFAHMAIKLNSMKNMLYEAAWKADNGTITSGDAAMCKYFCANAAFEVVDSAMQVLGGVGIAGNHRISRFWRDLRVDRVSGGSDEMQILTLGRAVLKQYR.

Belongs to the acyl-CoA dehydrogenase family. Homotetramer. Requires FAD as cofactor.

Its subcellular location is the cytoplasm. It carries out the reaction 4-(trimethylamino)butanoyl-CoA + oxidized [electron-transfer flavoprotein] + H(+) = crotonobetainyl-CoA + reduced [electron-transfer flavoprotein]. It participates in amine and polyamine metabolism; carnitine metabolism. In terms of biological role, catalyzes the reduction of crotonobetainyl-CoA to gamma-butyrobetainyl-CoA. The sequence is that of Crotonobetainyl-CoA reductase from Escherichia coli (strain UTI89 / UPEC).